Consider the following 329-residue polypeptide: Glycerol-3-phosphate dehydrogenase [NAD(P)+] (329 aa).

The NADPH site is built by Trp15, His35, and Lys107. Positions 107, 135, and 137 each coordinate sn-glycerol 3-phosphate. Ala139 provides a ligand contact to NADPH. The sn-glycerol 3-phosphate site is built by Lys190, Asp243, Ser253, Arg254, and Asn255. Lys190 (proton acceptor) is an active-site residue. Arg254 lines the NADPH pocket. NADPH contacts are provided by Leu276 and Glu278.

The protein belongs to the NAD-dependent glycerol-3-phosphate dehydrogenase family.

The protein localises to the cytoplasm. It catalyses the reaction sn-glycerol 3-phosphate + NAD(+) = dihydroxyacetone phosphate + NADH + H(+). The catalysed reaction is sn-glycerol 3-phosphate + NADP(+) = dihydroxyacetone phosphate + NADPH + H(+). Its pathway is membrane lipid metabolism; glycerophospholipid metabolism. In terms of biological role, catalyzes the reduction of the glycolytic intermediate dihydroxyacetone phosphate (DHAP) to sn-glycerol 3-phosphate (G3P), the key precursor for phospholipid synthesis. This is Glycerol-3-phosphate dehydrogenase [NAD(P)+] from Rhodopseudomonas palustris (strain HaA2).